The following is a 481-amino-acid chain: Dual specificity protein kinase CLK4 (481 aa).

Disordered stretches follow at residues 1-47 and 102-143; these read MRHS…KPHH and SKSS…EDDE. Residues 8 to 19 show a composition bias toward basic and acidic residues; sequence HCPDWDSRESWG. Composition is skewed to basic residues over residues 106-119 and 126-136; these read VRSRRSSPKRKRNR and SHSKSHRRKRS. Phosphoserine is present on residues Ser-136 and Ser-138. Residues 159–475 enclose the Protein kinase domain; the sequence is YEIVDTLGEG…LDEALQHPFF (317 aa). ATP-binding positions include 165 to 173 and Lys-189; that span reads LGEGAFGKV. The active-site Proton acceptor is the Asp-286.

Belongs to the protein kinase superfamily. CMGC Ser/Thr protein kinase family. Lammer subfamily. In terms of assembly, interacts with UBL5. In terms of processing, autophosphorylates on all three types of residues. In terms of tissue distribution, expressed in the hippocampus, the cerebellum and the olfactory bulb.

It is found in the nucleus. It carries out the reaction L-seryl-[protein] + ATP = O-phospho-L-seryl-[protein] + ADP + H(+). The enzyme catalyses L-threonyl-[protein] + ATP = O-phospho-L-threonyl-[protein] + ADP + H(+). It catalyses the reaction L-tyrosyl-[protein] + ATP = O-phospho-L-tyrosyl-[protein] + ADP + H(+). Its activity is regulated as follows. TG003 inhibits its kinase activity and affects the regulation of alternative splicing mediated by phosphorylation of SR proteins. Its function is as follows. Dual specificity kinase acting on both serine/threonine and tyrosine-containing substrates. Phosphorylates serine- and arginine-rich (SR) proteins of the spliceosomal complex and may be a constituent of a network of regulatory mechanisms that enable SR proteins to control RNA splicing. Phosphorylates SRSF1 and SRSF3. Required for the regulation of alternative splicing of MAPT/TAU. Regulates the alternative splicing of tissue factor (F3) pre-mRNA in endothelial cells. This Mus musculus (Mouse) protein is Dual specificity protein kinase CLK4 (Clk4).